The chain runs to 393 residues: tRNA(Met) cytidine acetate ligase (393 aa).

3 residues coordinate ATP: glycine 81, asparagine 142, and arginine 167.

The protein belongs to the TmcAL family.

The protein localises to the cytoplasm. It catalyses the reaction cytidine(34) in elongator tRNA(Met) + acetate + ATP = N(4)-acetylcytidine(34) in elongator tRNA(Met) + AMP + diphosphate. Its function is as follows. Catalyzes the formation of N(4)-acetylcytidine (ac(4)C) at the wobble position of elongator tRNA(Met), using acetate and ATP as substrates. First activates an acetate ion to form acetyladenylate (Ac-AMP) and then transfers the acetyl group to tRNA to form ac(4)C34. The polypeptide is tRNA(Met) cytidine acetate ligase (Bacillus mycoides (strain KBAB4) (Bacillus weihenstephanensis)).